The primary structure comprises 773 residues: Leucine-rich repeat and calponin homology domain-containing protein 2 (773 aa).

The interval 1–46 is disordered; sequence MAASQGGGGNSGGGGCSGGGSGGGGGAAGGGGGGGGGGGGGAGAGG. LRR repeat units lie at residues 97–118, 120–141, 143–164, 166–187, 188–209, 211–232, 234–256, 257–277, and 279–300; these read NSGI…GYDL, DTTQ…VWLF, PLET…IKNL, MLTY…LFDL, PLKV…IGKL, DLME…MGKL, SLKE…GDLP, LVKL…YRKL, and HLQV…ICLK. Disordered regions lie at residues 324–409, 438–478, and 573–633; these read LDLP…QKDQ, FLKG…LKEV, and KYKS…SRQE. Basic and acidic residues-rich tracts occupy residues 386 to 396 and 440 to 466; these read SNREQTSRNDS and KGKE…KEQL. Residues 594-603 are compositionally biased toward polar residues; that stretch reads AHMSAQSPVS. The Calponin-homology (CH) domain maps to 650–763; that stretch reads LREEREQIRQ…VTVQALLELP (114 aa).

In terms of biological role, may play a role in the organization of the cytoskeleton. The chain is Leucine-rich repeat and calponin homology domain-containing protein 2 (Lrch2) from Mus musculus (Mouse).